Consider the following 141-residue polypeptide: Large ribosomal subunit protein uL11 (141 aa).

It belongs to the universal ribosomal protein uL11 family. Part of the ribosomal stalk of the 50S ribosomal subunit. Interacts with L10 and the large rRNA to form the base of the stalk. L10 forms an elongated spine to which L12 dimers bind in a sequential fashion forming a multimeric L10(L12)X complex. In terms of processing, one or more lysine residues are methylated.

Forms part of the ribosomal stalk which helps the ribosome interact with GTP-bound translation factors. This Chlamydia trachomatis serovar L2 (strain ATCC VR-902B / DSM 19102 / 434/Bu) protein is Large ribosomal subunit protein uL11.